The chain runs to 784 residues: Phosphate transporter PHO1 homolog 1 (784 aa).

Over 1–387 the chain is Cytoplasmic; sequence MVKFTKQFEG…HHRKESHSVT (387 aa). Residues 2-335 form the SPX domain; that stretch reads VKFTKQFEGQ…GKQILPIYLK (334 aa). Residues 388–408 traverse the membrane as a helical segment; it reads FFIGLFTGCFVALLAGYIIVA. Residues 409-429 are Extracellular-facing; it reads HLTGMYRQHSANTFYMETAYP. Residues 430–450 traverse the membrane as a helical segment; it reads VLSMFGLLFLHLFLYGCNIFM. Residues 451–474 are Cytoplasmic-facing; it reads WRKARINYSFIFELGSKNELKYRD. The chain crosses the membrane as a helical span at residues 475–495; sequence VFLICTASMSAIAGVMFVHLS. Over 496–507 the chain is Extracellular; the sequence is LLEKGYSFRQVQ. A helical membrane pass occupies residues 508-528; it reads VIPGLLLLGFLLILICPLNIF. At 529-654 the chain is on the cytoplasmic side; sequence YKSSRYRLIS…TKVAYEKERS (126 aa). An EXS domain is found at 593–784; the sequence is MRVKYYRDLA…LPFREVDEED (192 aa). A helical transmembrane segment spans residues 655 to 675; sequence LGWLCLVVAMSSVATIYQLYW. The Extracellular segment spans residues 676–703; sequence DFVKDWGLLQHNSNNPWLRNQLMLRQKS. A helical transmembrane segment spans residues 704 to 724; that stretch reads IYYFSMVLNLVLRLAWLQTVL. At 725 to 784 the chain is on the cytoplasmic side; sequence HSSFEHVDYRVTGLFLAALEVIRRGQWNFYRLENEHLNNAGKFRAVKTVPLPFREVDEED.

This sequence belongs to the SYG1 (TC 2.A.94) family. As to expression, expressed in vascular cylinder of roots, leaves, stems, petals, sepals and filaments. Expressed in receptacle, stigma apex and anther connective tissue.

The protein resides in the cell membrane. In terms of biological role, contributes to the loading of inorganic phosphate (Pi) into the root xylem vessels. In Arabidopsis thaliana (Mouse-ear cress), this protein is Phosphate transporter PHO1 homolog 1 (PHO1-H1).